The chain runs to 475 residues: Ribulose bisphosphate carboxylase large chain (475 aa).

The propeptide occupies 1–2; it reads MS. Pro3 carries the N-acetylproline modification. An N6,N6,N6-trimethyllysine modification is found at Lys14. 2 residues coordinate substrate: Asn123 and Thr173. Lys175 acts as the Proton acceptor in catalysis. Lys177 is a substrate binding site. Mg(2+) contacts are provided by Lys201, Asp203, and Glu204. Lys201 carries the N6-carboxylysine modification. His294 serves as the catalytic Proton acceptor. The substrate site is built by Arg295, His327, and Ser379.

The protein belongs to the RuBisCO large chain family. Type I subfamily. As to quaternary structure, heterohexadecamer of 8 large chains and 8 small chains; disulfide-linked. The disulfide link is formed within the large subunit homodimers. Mg(2+) is required as a cofactor. Post-translationally, the disulfide bond which can form in the large chain dimeric partners within the hexadecamer appears to be associated with oxidative stress and protein turnover.

The protein localises to the plastid. Its subcellular location is the chloroplast. The enzyme catalyses 2 (2R)-3-phosphoglycerate + 2 H(+) = D-ribulose 1,5-bisphosphate + CO2 + H2O. The catalysed reaction is D-ribulose 1,5-bisphosphate + O2 = 2-phosphoglycolate + (2R)-3-phosphoglycerate + 2 H(+). Its function is as follows. RuBisCO catalyzes two reactions: the carboxylation of D-ribulose 1,5-bisphosphate, the primary event in carbon dioxide fixation, as well as the oxidative fragmentation of the pentose substrate in the photorespiration process. Both reactions occur simultaneously and in competition at the same active site. The chain is Ribulose bisphosphate carboxylase large chain from Atriplex rosea (Red orache).